Consider the following 197-residue polypeptide: Large ribosomal subunit protein uL10 (197 aa).

The segment at 163–197 (GAPAAAEAPAAEESADSAAEAAAEAPAEAPAAEEN) is disordered.

This sequence belongs to the universal ribosomal protein uL10 family. As to quaternary structure, part of the ribosomal stalk of the 50S ribosomal subunit. The N-terminus interacts with L11 and the large rRNA to form the base of the stalk. The C-terminus forms an elongated spine to which L12 dimers bind in a sequential fashion forming a multimeric L10(L12)X complex.

Forms part of the ribosomal stalk, playing a central role in the interaction of the ribosome with GTP-bound translation factors. This is Large ribosomal subunit protein uL10 from Pseudarthrobacter chlorophenolicus (strain ATCC 700700 / DSM 12829 / CIP 107037 / JCM 12360 / KCTC 9906 / NCIMB 13794 / A6) (Arthrobacter chlorophenolicus).